The chain runs to 41 residues: MKIKSSLKSLKKRDLNSKLVRRRGRVYIINKTNPKFKARQK.

The protein belongs to the bacterial ribosomal protein bL36 family.

The sequence is that of Large ribosomal subunit protein bL36 from Pelagibacter ubique (strain HTCC1062).